The sequence spans 117 residues: Fluoride-specific ion channel FluC 2 (117 aa).

4 consecutive transmembrane segments (helical) span residues Met1 to Ile21, Ile33 to Gly53, Met61 to Ser81, and Ile94 to Gly114. Positions 71 and 74 each coordinate Na(+).

The protein belongs to the fluoride channel Fluc/FEX (TC 1.A.43) family.

The protein localises to the cell membrane. It catalyses the reaction fluoride(in) = fluoride(out). Its activity is regulated as follows. Na(+) is not transported, but it plays an essential structural role and its presence is essential for fluoride channel function. Its function is as follows. Fluoride-specific ion channel. Important for reducing fluoride concentration in the cell, thus reducing its toxicity. The polypeptide is Fluoride-specific ion channel FluC 2 (Staphylococcus epidermidis (strain ATCC 35984 / DSM 28319 / BCRC 17069 / CCUG 31568 / BM 3577 / RP62A)).